Here is a 426-residue protein sequence, read N- to C-terminus: Adenylosuccinate synthetase (426 aa).

GTP-binding positions include Gly-12–Lys-18 and Gly-40–Thr-42. Asp-13 functions as the Proton acceptor in the catalytic mechanism. Asp-13 and Gly-40 together coordinate Mg(2+). IMP is bound by residues Asp-13–Lys-16, Asn-38–His-41, Thr-128, Arg-142, Gln-223, Thr-238, and Arg-302. The active-site Proton donor is the His-41. Thr-298–Arg-304 contacts substrate. GTP is bound by residues Arg-304, Lys-330–Asp-332, and Ser-412–Gly-414.

Belongs to the adenylosuccinate synthetase family. Homodimer. Mg(2+) serves as cofactor.

It localises to the cytoplasm. The catalysed reaction is IMP + L-aspartate + GTP = N(6)-(1,2-dicarboxyethyl)-AMP + GDP + phosphate + 2 H(+). It functions in the pathway purine metabolism; AMP biosynthesis via de novo pathway; AMP from IMP: step 1/2. Its function is as follows. Plays an important role in the de novo pathway of purine nucleotide biosynthesis. Catalyzes the first committed step in the biosynthesis of AMP from IMP. This Thermoanaerobacter pseudethanolicus (strain ATCC 33223 / 39E) (Clostridium thermohydrosulfuricum) protein is Adenylosuccinate synthetase.